We begin with the raw amino-acid sequence, 735 residues long: Exocyst complex component 7 (735 aa).

Coiled coils occupy residues 5-42 and 63-85; these read QEAS…TKNM and VHKQ…SCLD. Residue Ser133 is modified to Phosphoserine. The disordered stretch occupies residues 239 to 268; it reads HKSSSSSGVPYSPAIPNKRKDTPTKKPVKR.

This sequence belongs to the EXO70 family. As to quaternary structure, the exocyst complex is composed of EXOC1, EXOC2, EXOC3, EXOC4, EXOC5, EXOC6, EXOC7 and EXOC8. Interacts with ARHQ in a GTP-dependent manner. Interacts with RAB11FIP3. Abundant in the ventricular zone, the outer subventricular zone and the cortical plate of the fetal cortex.

It is found in the cytoplasm. It localises to the cytosol. The protein resides in the cell membrane. The protein localises to the midbody. Its subcellular location is the midbody ring. Component of the exocyst complex involved in the docking of exocytic vesicles with fusion sites on the plasma membrane. In adipocytes, plays a crucial role in targeting SLC2A4 vesicle to the plasma membrane in response to insulin, perhaps directing the vesicle to the precise site of fusion. It is required for neuron survival and plays an essential role in cortical development. In Homo sapiens (Human), this protein is Exocyst complex component 7 (EXOC7).